A 204-amino-acid chain; its full sequence is Peptide chain release factor homolog (204 aa).

The interval 2-98 is rRNA-recognition domain, N-terminus; sequence ILLQLSSAQG…KNWFLGIGRF (97 aa). The segment at 99–107 is linker 1; that stretch reads TADEQEQSD. The segment at 108 to 161 is GGQ domain; sequence AIRYETLRSSGPGGQHVNKTDSAVRATHLASGISVKVQSERSQHANKRLARLLI. A GGQ motif motif is present at residues 120–122; that stretch reads GGQ. The linker 2 stretch occupies residues 162 to 179; that stretch reads AWKLEQQQQENSAALKSQ. Residues 180 to 204 are rRNA-recognition domain, C-terminus; it reads RRMFHHQIERGNPRRTFTGMAFIEG.

It belongs to the prokaryotic/mitochondrial release factor family. In terms of assembly, found in the A site of damaged 70S ribosomes, but not in undamaged ribosomes. Contacts (damaged) 16S rRNA, 23S rRNA and ribosomal protein uS12, but not mRNA.

In terms of biological role, peptide chain release-like factor that acts on 70S ribosomes with specific damage to their decoding center (cleavage of 16S rRNA between adenine-1493 and guanosine-1494, E.coli 16S rRNA numbering). Probably acts as a peptidyl-tRNA hydrolase, allowing release of the nascent chain and dissociation of the 30S and 50S subunits. Can release mRNA as short as 19 nucleotides (nt, mRNA-19, which has a single amino acid in the P-site and only a single nt in the A-site) from the ribosome. This specific cleavage is inflicted by CdiA (ECL_04451) or by colicin E3-type (ColE3) proteins. In vivo the PrfH-RtcB2 pair restores growth in the presence of ribotoxins that specifically create this damage. The protein is Peptide chain release factor homolog of Escherichia coli (strain ATCC 25922 / DSM 1103 / LMG 8223 / NCIMB 12210 / NCTC 12241 / WDCM 00013 / Seattle 1946).